Consider the following 119-residue polypeptide: Ribonuclease P protein component (119 aa).

It belongs to the RnpA family. As to quaternary structure, consists of a catalytic RNA component (M1 or rnpB) and a protein subunit.

The enzyme catalyses Endonucleolytic cleavage of RNA, removing 5'-extranucleotides from tRNA precursor.. In terms of biological role, RNaseP catalyzes the removal of the 5'-leader sequence from pre-tRNA to produce the mature 5'-terminus. It can also cleave other RNA substrates such as 4.5S RNA. The protein component plays an auxiliary but essential role in vivo by binding to the 5'-leader sequence and broadening the substrate specificity of the ribozyme. The polypeptide is Ribonuclease P protein component (Streptococcus pyogenes serotype M12 (strain MGAS2096)).